Consider the following 128-residue polypeptide: MNLATIASEIEVVKTNQKTIESKIDQILAKIGSTPDESSNLESVAAKIISDLTKEMKECHCNKEIVEILNKDKAIIPSPEQDSIQKRLSEPQYTFPNFDVGNEGMGSSTNPNALKWPPTEKPQPWPPR.

2 coiled-coil regions span residues 1-30 (MNLATIASEIEVVKTNQKTIESKIDQILAK) and 37-58 (ESSNLESVAAKIISDLTKEMKE). The tract at residues 98-128 (FDVGNEGMGSSTNPNALKWPPTEKPQPWPPR) is disordered. Positions 119 to 128 (TEKPQPWPPR) are enriched in pro residues. The capsid binding stretch occupies residues 122–128 (PQPWPPR).

This sequence belongs to the caulimovirus ORF III family. As to quaternary structure, homotetramer, through coiled-coil domain. Homotrimer when interacts with icosehadral capsid. Interacts with capsid protein, and with Movement protein.

It is found in the virion. Its subcellular location is the host cell junction. The protein resides in the host plasmodesma. Its function is as follows. Plays a role in virus cell-to-cell and plant-to-plant transmission. Interacts with virion icosahedral capsid and movement protein, thereby facilitating virion cell-to-cell transmission through plasmodesmata opened by viral movement protein. Also interacts with aphid transmission factor, attaching the virion to aphid stylet when the animal feeds on an virus infected plant. Aphid saliva may later detach the virion, inducing release of infectious particles when the animal feeds on a new plant. The protein is Virion-associated protein of Carnation etched ring virus (CERV).